The sequence spans 322 residues: DNA repair and recombination protein RadA (322 aa).

105–112 (GMYGSGKT) contributes to the ATP binding site.

This sequence belongs to the eukaryotic RecA-like protein family.

Functionally, involved in DNA repair and in homologous recombination. Binds and assemble on single-stranded DNA to form a nucleoprotein filament. Hydrolyzes ATP in a ssDNA-dependent manner and promotes DNA strand exchange between homologous DNA molecules. This chain is DNA repair and recombination protein RadA, found in Methanococcus maripaludis (strain C6 / ATCC BAA-1332).